We begin with the raw amino-acid sequence, 472 residues long: Poly(A) polymerase catalytic subunit (472 aa).

Catalysis depends on residues D194 and D196.

It belongs to the poxviridae poly(A) polymerase catalytic subunit family. As to quaternary structure, heterodimer of a large (catalytic) subunit and a small (regulatory) subunit.

It carries out the reaction RNA(n) + ATP = RNA(n)-3'-adenine ribonucleotide + diphosphate. Polymerase that creates the 3'-poly(A) tail of mRNA's. This is Poly(A) polymerase catalytic subunit (PAPL) from Fowlpox virus (strain NVSL) (FPV).